A 254-amino-acid chain; its full sequence is Alcohol dehydrogenase (254 aa).

10–33 is a binding site for NAD(+); the sequence is FVAGLGGIGFDTSREIVKSGPKNL. Ser138 contacts substrate. The active-site Proton acceptor is Tyr151.

Belongs to the short-chain dehydrogenases/reductases (SDR) family. As to quaternary structure, homodimer.

It catalyses the reaction a primary alcohol + NAD(+) = an aldehyde + NADH + H(+). The catalysed reaction is a secondary alcohol + NAD(+) = a ketone + NADH + H(+). The protein is Alcohol dehydrogenase (Adh) of Drosophila mayaguana (Fruit fly).